The primary structure comprises 327 residues: Phenylalanine--tRNA ligase alpha subunit (327 aa).

Glu-252 provides a ligand contact to Mg(2+).

It belongs to the class-II aminoacyl-tRNA synthetase family. Phe-tRNA synthetase alpha subunit type 1 subfamily. Tetramer of two alpha and two beta subunits. Mg(2+) is required as a cofactor.

It localises to the cytoplasm. The enzyme catalyses tRNA(Phe) + L-phenylalanine + ATP = L-phenylalanyl-tRNA(Phe) + AMP + diphosphate + H(+). The chain is Phenylalanine--tRNA ligase alpha subunit from Escherichia coli O127:H6 (strain E2348/69 / EPEC).